Here is a 564-residue protein sequence, read N- to C-terminus: MSRRAYAEMYGPTTGDRIRLADTELLIEVERDYTIYGEEVKFGGGKVIRDGMGQSQLSAADVADTVITNAVILDHWGIVKADIAIKHGRIAAIGKAGNPDIQPGVTIAIGAATEIIAGEGLIVTAGGIDTHIHFISPQQIDEALASGVTTMIGGGTGPATGTNATTCTPGPWHMERMLQAADGWPINLGFLGKGNASRPQPLVEQIEAGAIGLKLHEDWGTTPAAIDNCLTVADDTDTQVAIHTDTLNEGGFVEATVAAFKGRTIHTYHTEGAGGGHAPDILKVCGEPNVLPSSTNPTRPYTINTLDEHLDMLMVCHHLDPSIAEDLAFAESRIRRETIAAEDILHDLGALSMLSSDSQAMGRVGEVIIRTWQSAHKMKMQRGALAEDSARNDNFRAKRYVAKYTINPALTHGIAHEVGSIEPGKWADLVLWEPAFFGVKPAMIIKGGMIAVAQMGDPNASIPTPQPVHYREMFATRGGALARTSLTFVSQLTLDAGIGARYGLAKRLVPVRGCRTVTKRDMIHNAWQPAISVDPETYDVVADGALLTCEPAAVLPMAQRYFLF.

Residues 126–564 enclose the Urease domain; sequence GGIDTHIHFI…LPMAQRYFLF (439 aa). Positions 131, 133, and 214 each coordinate Ni(2+). The residue at position 214 (lysine 214) is an N6-carboxylysine. Residue histidine 216 coordinates substrate. Ni(2+) contacts are provided by histidine 243 and histidine 269. Histidine 317 serves as the catalytic Proton donor. Position 357 (aspartate 357) interacts with Ni(2+).

This sequence belongs to the metallo-dependent hydrolases superfamily. Urease alpha subunit family. In terms of assembly, heterotrimer of UreA (gamma), UreB (beta) and UreC (alpha) subunits. Three heterotrimers associate to form the active enzyme. The cofactor is Ni cation. In terms of processing, carboxylation allows a single lysine to coordinate two nickel ions.

The protein resides in the cytoplasm. The catalysed reaction is urea + 2 H2O + H(+) = hydrogencarbonate + 2 NH4(+). Its pathway is nitrogen metabolism; urea degradation; CO(2) and NH(3) from urea (urease route): step 1/1. This is Urease subunit alpha from Burkholderia thailandensis (strain ATCC 700388 / DSM 13276 / CCUG 48851 / CIP 106301 / E264).